A 157-amino-acid polypeptide reads, in one-letter code: 6,7-dimethyl-8-ribityllumazine synthase 1 (157 aa).

5-amino-6-(D-ribitylamino)uracil contacts are provided by residues Phe-22, 53–55, and 82–84; these read ALE and TVI. 87–88 serves as a coordination point for (2S)-2-hydroxy-3-oxobutyl phosphate; that stretch reads ET. His-90 functions as the Proton donor in the catalytic mechanism. Asn-115 serves as a coordination point for 5-amino-6-(D-ribitylamino)uracil. Residue Arg-129 participates in (2S)-2-hydroxy-3-oxobutyl phosphate binding.

This sequence belongs to the DMRL synthase family.

It catalyses the reaction (2S)-2-hydroxy-3-oxobutyl phosphate + 5-amino-6-(D-ribitylamino)uracil = 6,7-dimethyl-8-(1-D-ribityl)lumazine + phosphate + 2 H2O + H(+). The protein operates within cofactor biosynthesis; riboflavin biosynthesis; riboflavin from 2-hydroxy-3-oxobutyl phosphate and 5-amino-6-(D-ribitylamino)uracil: step 1/2. Functionally, catalyzes the formation of 6,7-dimethyl-8-ribityllumazine by condensation of 5-amino-6-(D-ribitylamino)uracil with 3,4-dihydroxy-2-butanone 4-phosphate. This is the penultimate step in the biosynthesis of riboflavin. The polypeptide is 6,7-dimethyl-8-ribityllumazine synthase 1 (Brucella suis biovar 1 (strain 1330)).